Here is a 73-residue protein sequence, read N- to C-terminus: Putative membrane protein insertion efficiency factor (73 aa).

It belongs to the UPF0161 family.

It localises to the cell inner membrane. Its function is as follows. Could be involved in insertion of integral membrane proteins into the membrane. The protein is Putative membrane protein insertion efficiency factor of Rickettsia bellii (strain RML369-C).